A 155-amino-acid chain; its full sequence is Ribosomal RNA large subunit methyltransferase H (155 aa).

S-adenosyl-L-methionine-binding positions include L72, G103, and 122–127 (LSALTL).

This sequence belongs to the RNA methyltransferase RlmH family. Homodimer.

It is found in the cytoplasm. The catalysed reaction is pseudouridine(1915) in 23S rRNA + S-adenosyl-L-methionine = N(3)-methylpseudouridine(1915) in 23S rRNA + S-adenosyl-L-homocysteine + H(+). In terms of biological role, specifically methylates the pseudouridine at position 1915 (m3Psi1915) in 23S rRNA. In Enterobacter sp. (strain 638), this protein is Ribosomal RNA large subunit methyltransferase H.